Consider the following 342-residue polypeptide: RNA 3'-terminal phosphate cyclase (342 aa).

Belongs to the RNA 3'-terminal cyclase family. Type 1 subfamily.

The protein localises to the cytoplasm. It catalyses the reaction a 3'-end 3'-phospho-ribonucleotide-RNA + GTP = a 3'-end 2',3'-cyclophospho-ribonucleotide-RNA + GMP + diphosphate. Inhibited by GMP. Catalyzes the GTP-dependent conversion of 3'-phosphate to a 2',3'-cyclic phosphodiester at the end of RNA. The biological role of this enzyme is unknown but it is likely to function in some aspects of cellular RNA processing. This is RNA 3'-terminal phosphate cyclase from Pyrococcus furiosus (strain ATCC 43587 / DSM 3638 / JCM 8422 / Vc1).